The following is a 595-amino-acid chain: Tripeptidyl-peptidase SED3 (595 aa).

Positions 1 to 22 (MLLPWQQTIIILFLGVNSLVAA) are cleaved as a signal peptide. A propeptide spans 23 to 201 (LRNTYRTVEE…KLETIQLSSN (179 aa)) (removed in mature form). Asn207, Asn264, and Asn278 each carry an N-linked (GlcNAc...) asparagine glycan. The 387-residue stretch at 209–595 (TITPQCLRDI…EILAKIVRDL (387 aa)) folds into the Peptidase S53 domain. Residues Glu285 and Asp289 each act as charge relay system in the active site. Residues Asn298 and Asn365 are each glycosylated (N-linked (GlcNAc...) asparagine). Ser499 serves as the catalytic Charge relay system. Ca(2+) contacts are provided by Asp541 and Ile542. N-linked (GlcNAc...) asparagine glycans are attached at residues Asn554, Asn557, and Asn569. Ca(2+)-binding residues include Gly573 and Asp575.

Ca(2+) is required as a cofactor.

It localises to the secreted. The protein resides in the extracellular space. It catalyses the reaction Release of an N-terminal tripeptide from a polypeptide.. In terms of biological role, secreted tripeptidyl-peptidase which degrades proteins at acidic pHs and is involved in virulence. In Arthroderma otae (strain ATCC MYA-4605 / CBS 113480) (Microsporum canis), this protein is Tripeptidyl-peptidase SED3 (SED3).